A 78-amino-acid polypeptide reads, in one-letter code: Small ribosomal subunit protein bS16c (78 aa).

Belongs to the bacterial ribosomal protein bS16 family.

It localises to the plastid. The protein localises to the chloroplast. The sequence is that of Small ribosomal subunit protein bS16c from Daucus carota (Wild carrot).